A 464-amino-acid polypeptide reads, in one-letter code: Glutamate--tRNA ligase (464 aa).

Positions 9–19 (PSPTGYLHIGG) match the 'HIGH' region motif. The short motif at 242–246 (KISKR) is the 'KMSKS' region element. Lysine 245 is a binding site for ATP.

It belongs to the class-I aminoacyl-tRNA synthetase family. Glutamate--tRNA ligase type 1 subfamily. Monomer.

It localises to the cytoplasm. The enzyme catalyses tRNA(Glu) + L-glutamate + ATP = L-glutamyl-tRNA(Glu) + AMP + diphosphate. In terms of biological role, catalyzes the attachment of glutamate to tRNA(Glu) in a two-step reaction: glutamate is first activated by ATP to form Glu-AMP and then transferred to the acceptor end of tRNA(Glu). In Neisseria meningitidis serogroup A / serotype 4A (strain DSM 15465 / Z2491), this protein is Glutamate--tRNA ligase.